Here is a 186-residue protein sequence, read N- to C-terminus: Transposon Tn21 resolvase (186 aa).

Residues 4 to 137 enclose the Resolvase/invertase-type recombinase catalytic domain; the sequence is QRIGYIRVST…EGIALAKQRG (134 aa). Residue Ser-12 is the O-(5'-phospho-DNA)-serine intermediate of the active site. A DNA-binding region (H-T-H motif) is located at residues 164-183; the sequence is KTKLAREFGISRETLYQYLR.

The protein belongs to the site-specific recombinase resolvase family.

Functionally, resolvase catalyzes the resolution (a site-specific recombination) of the cointegrated replicon to yield the final transposition products. In Escherichia coli, this protein is Transposon Tn21 resolvase (tnpR).